A 573-amino-acid polypeptide reads, in one-letter code: 2-succinyl-5-enolpyruvyl-6-hydroxy-3-cyclohexene-1-carboxylate synthase (573 aa).

This sequence belongs to the TPP enzyme family. MenD subfamily. As to quaternary structure, homodimer. The cofactor is Mg(2+). Requires Mn(2+) as cofactor. It depends on thiamine diphosphate as a cofactor.

It carries out the reaction isochorismate + 2-oxoglutarate + H(+) = 5-enolpyruvoyl-6-hydroxy-2-succinyl-cyclohex-3-ene-1-carboxylate + CO2. It functions in the pathway quinol/quinone metabolism; 1,4-dihydroxy-2-naphthoate biosynthesis; 1,4-dihydroxy-2-naphthoate from chorismate: step 2/7. Its pathway is quinol/quinone metabolism; menaquinone biosynthesis. Its function is as follows. Catalyzes the thiamine diphosphate-dependent decarboxylation of 2-oxoglutarate and the subsequent addition of the resulting succinic semialdehyde-thiamine pyrophosphate anion to isochorismate to yield 2-succinyl-5-enolpyruvyl-6-hydroxy-3-cyclohexene-1-carboxylate (SEPHCHC). This Shewanella baltica (strain OS185) protein is 2-succinyl-5-enolpyruvyl-6-hydroxy-3-cyclohexene-1-carboxylate synthase.